A 258-amino-acid polypeptide reads, in one-letter code: Imidazole glycerol phosphate synthase subunit HisF (258 aa).

Catalysis depends on residues Asp-11 and Asp-130.

Belongs to the HisA/HisF family. Heterodimer of HisH and HisF.

It is found in the cytoplasm. It carries out the reaction 5-[(5-phospho-1-deoxy-D-ribulos-1-ylimino)methylamino]-1-(5-phospho-beta-D-ribosyl)imidazole-4-carboxamide + L-glutamine = D-erythro-1-(imidazol-4-yl)glycerol 3-phosphate + 5-amino-1-(5-phospho-beta-D-ribosyl)imidazole-4-carboxamide + L-glutamate + H(+). It functions in the pathway amino-acid biosynthesis; L-histidine biosynthesis; L-histidine from 5-phospho-alpha-D-ribose 1-diphosphate: step 5/9. IGPS catalyzes the conversion of PRFAR and glutamine to IGP, AICAR and glutamate. The HisF subunit catalyzes the cyclization activity that produces IGP and AICAR from PRFAR using the ammonia provided by the HisH subunit. This chain is Imidazole glycerol phosphate synthase subunit HisF, found in Stenotrophomonas maltophilia (strain R551-3).